We begin with the raw amino-acid sequence, 154 residues long: Deoxyuridine 5'-triphosphate nucleotidohydrolase (154 aa).

Substrate is bound by residues 70-72 (RSG), Asn83, 87-89 (LID), and Met97.

This sequence belongs to the dUTPase family. Requires Mg(2+) as cofactor.

It carries out the reaction dUTP + H2O = dUMP + diphosphate + H(+). It participates in pyrimidine metabolism; dUMP biosynthesis; dUMP from dCTP (dUTP route): step 2/2. In terms of biological role, this enzyme is involved in nucleotide metabolism: it produces dUMP, the immediate precursor of thymidine nucleotides and it decreases the intracellular concentration of dUTP so that uracil cannot be incorporated into DNA. This is Deoxyuridine 5'-triphosphate nucleotidohydrolase from Buchnera aphidicola subsp. Acyrthosiphon pisum (strain 5A).